We begin with the raw amino-acid sequence, 72 residues long: Conotoxin LiC53 (72 aa).

The N-terminal stretch at 1–23 is a signal peptide; sequence MEKLTSLLLVAALLMLTQTLIQG. Positions 24–41 are excised as a propeptide; the sequence is GGEDRPNKKFLQKIKSTA. 3 cysteine pairs are disulfide-bonded: Cys45–Cys59, Cys52–Cys63, and Cys58–Cys68.

Belongs to the conotoxin O2 superfamily. In terms of tissue distribution, expressed by the venom duct.

The protein localises to the secreted. The chain is Conotoxin LiC53 from Conus lividus (Livid cone).